Consider the following 339-residue polypeptide: D-erythrose-4-phosphate dehydrogenase (339 aa).

Residue 11–12 (RI) participates in NAD(+) binding. Residues 158 to 160 (SCT), R204, 217 to 218 (TK), and R240 contribute to the substrate site. The active-site Nucleophile is the C159. N322 is an NAD(+) binding site.

It belongs to the glyceraldehyde-3-phosphate dehydrogenase family. Epd subfamily. Homotetramer.

The protein resides in the cytoplasm. It catalyses the reaction D-erythrose 4-phosphate + NAD(+) + H2O = 4-phospho-D-erythronate + NADH + 2 H(+). It functions in the pathway cofactor biosynthesis; pyridoxine 5'-phosphate biosynthesis; pyridoxine 5'-phosphate from D-erythrose 4-phosphate: step 1/5. In terms of biological role, catalyzes the NAD-dependent conversion of D-erythrose 4-phosphate to 4-phosphoerythronate. This chain is D-erythrose-4-phosphate dehydrogenase, found in Aliivibrio salmonicida (strain LFI1238) (Vibrio salmonicida (strain LFI1238)).